We begin with the raw amino-acid sequence, 451 residues long: Cytochrome c biogenesis protein CcsB (451 aa).

3 consecutive transmembrane segments (helical) span residues 30–50, 89–109, and 175–195; these read LRLA…GTVI, TWWF…CTFT, and IGPI…IWGA.

It belongs to the Ccs1/CcsB family. As to quaternary structure, may interact with CcsA.

It is found in the cellular thylakoid membrane. In terms of biological role, required during biogenesis of c-type cytochromes (cytochrome c6 and cytochrome f) at the step of heme attachment. The sequence is that of Cytochrome c biogenesis protein CcsB from Crocosphaera subtropica (strain ATCC 51142 / BH68) (Cyanothece sp. (strain ATCC 51142)).